The sequence spans 242 residues: Glucosamine-6-phosphate deaminase (242 aa).

Asp71 functions as the Proton acceptor; for enolization step in the catalytic mechanism. The active-site For ring-opening step is Asn142. Residue His144 is the Proton acceptor; for ring-opening step of the active site. The active-site For ring-opening step is the Glu149.

Belongs to the glucosamine/galactosamine-6-phosphate isomerase family. NagB subfamily.

The catalysed reaction is alpha-D-glucosamine 6-phosphate + H2O = beta-D-fructose 6-phosphate + NH4(+). Its pathway is amino-sugar metabolism; N-acetylneuraminate degradation; D-fructose 6-phosphate from N-acetylneuraminate: step 5/5. Catalyzes the reversible isomerization-deamination of glucosamine 6-phosphate (GlcN6P) to form fructose 6-phosphate (Fru6P) and ammonium ion. In Malacoplasma penetrans (strain HF-2) (Mycoplasma penetrans), this protein is Glucosamine-6-phosphate deaminase.